The primary structure comprises 110 residues: UPF0145 protein (110 aa).

The protein belongs to the UPF0145 family.

In Listeria welshimeri, this protein is UPF0145 protein.